Reading from the N-terminus, the 451-residue chain is Phosphoglucosamine mutase (451 aa).

Catalysis depends on Ser-101, which acts as the Phosphoserine intermediate. Residues Ser-101, Asp-240, Asp-242, and Asp-244 each contribute to the Mg(2+) site. Ser-101 carries the phosphoserine modification.

It belongs to the phosphohexose mutase family. Requires Mg(2+) as cofactor. Post-translationally, activated by phosphorylation.

The catalysed reaction is alpha-D-glucosamine 1-phosphate = D-glucosamine 6-phosphate. Its function is as follows. Catalyzes the conversion of glucosamine-6-phosphate to glucosamine-1-phosphate. The chain is Phosphoglucosamine mutase from Streptococcus pyogenes serotype M3 (strain SSI-1).